Reading from the N-terminus, the 63-residue chain is MASVAESSGVVEVIELISDGGNDLPRKIMSGRHGGICPRILMPCKTDDDCMLDCRCLSNGYCG.

Positions 1-21 (MASVAESSGVVEVIELISDGG) are cleaved as a signal peptide. Positions 22–34 (NDLPRKIMSGRHG) are excised as a propeptide. 3 disulfide bridges follow: Cys-37–Cys-54, Cys-44–Cys-56, and Cys-50–Cys-62.

Belongs to the protease inhibitor I7 (squash-type serine protease inhibitor) family.

The protein localises to the secreted. Functionally, inhibits trypsin. The polypeptide is Trypsin inhibitor 5 (Luffa aegyptiaca (Sponge gourd)).